We begin with the raw amino-acid sequence, 187 residues long: Elongation factor P (187 aa).

The protein belongs to the elongation factor P family.

The protein resides in the cytoplasm. It participates in protein biosynthesis; polypeptide chain elongation. In terms of biological role, involved in peptide bond synthesis. Stimulates efficient translation and peptide-bond synthesis on native or reconstituted 70S ribosomes in vitro. Probably functions indirectly by altering the affinity of the ribosome for aminoacyl-tRNA, thus increasing their reactivity as acceptors for peptidyl transferase. The chain is Elongation factor P from Corynebacterium diphtheriae (strain ATCC 700971 / NCTC 13129 / Biotype gravis).